A 475-amino-acid polypeptide reads, in one-letter code: Beta-amyrin 28-monooxygenase (475 aa).

Residues 2–22 (YLTILFLFVSSILLSLMFLLR) form a helical membrane-spanning segment. A heme-binding site is contributed by C422.

It belongs to the cytochrome P450 family. Heme is required as a cofactor.

The protein localises to the membrane. The catalysed reaction is beta-amyrin + 3 reduced [NADPH--hemoprotein reductase] + 3 O2 = oleanolate + 3 oxidized [NADPH--hemoprotein reductase] + 4 H2O + 4 H(+). Its function is as follows. Catalyzes the oxidation of the methyl group to a carboxyl group at the C-28 position of beta-amyrin to form oleanolate. This Barbarea vulgaris (Yellow rocket) protein is Beta-amyrin 28-monooxygenase.